A 355-amino-acid polypeptide reads, in one-letter code: Mu-like prophage FluMu protein gp47 (355 aa).

The protein belongs to the Mu gp47/PBSX XkdT family.

The protein is Mu-like prophage FluMu protein gp47 of Haemophilus influenzae (strain ATCC 51907 / DSM 11121 / KW20 / Rd).